A 550-amino-acid chain; its full sequence is Tether containing UBX domain for GLUT4 (550 aa).

An N-acetylalanine modification is found at Ala-2. The disordered stretch occupies residues 185–320 (AVRSKAPGSP…EPPVDRDPVV (136 aa)). Residue Ser-193 is modified to Phosphoserine. The span at 193-206 (SPVSSLSADQASSS) shows a compositional bias: low complexity. A compositionally biased stretch (basic and acidic residues) spans 217–226 (SRGDLNHEGD). The segment covering 242–252 (DAQTKQSTSEP) has biased composition (polar residues). The interval 313–376 (PVDRDPVVYH…LVTKAFREAQ (64 aa)) is interaction with GLUT4. A UBX domain is found at 382–458 (ERYPKVALRV…NLFPAALVHF (77 aa)). Phosphoserine is present on Ser-496. Positions 496 to 550 (SPPLLPAPDPVSLESEPIAEDGALGPPEPIQGTAQPVKRSLGKVPKWLKLPASKR) are disordered.

Interacts with VCP. Interacts with VCPKMT. Interacts with GLUT4. In terms of tissue distribution, ubiquitous.

The protein localises to the endomembrane system. It is found in the endoplasmic reticulum-Golgi intermediate compartment membrane. It localises to the cytoplasm. The protein resides in the nucleus. Its function is as follows. Enhances VCP methylation catalyzed by VCPKMT. Tethering protein that sequesters GLUT4-containing vesicles in the cytoplasm in the absence of insulin. Modulates the amount of GLUT4 that is available at the cell surface. This chain is Tether containing UBX domain for GLUT4 (Aspscr1), found in Mus musculus (Mouse).